Here is a 398-residue protein sequence, read N- to C-terminus: Cholinephosphotransferase 1 (398 aa).

A2 carries the post-translational modification N-acetylalanine. The Cytoplasmic segment spans residues 2–62; the sequence is AAGAGARPAP…LLQWIPLWMA (61 aa). The chain crosses the membrane as a helical span at residues 63–83; the sequence is PNTITLIGLAINLVTTLVLIF. Residue N64 participates in CDP-choline binding. The Lumenal segment spans residues 84–93; sequence YCPTVTEEAP. The chain crosses the membrane as a helical span at residues 94–118; that stretch reads YWTYLLCALGLFIYQSLDAIDGKQA. Positions 111 and 114 each coordinate Mg(2+). R119 lines the CDP-choline pocket. Topologically, residues 119–125 are cytoplasmic; sequence RRTNSCS. The chain crosses the membrane as a helical span at residues 126 to 150; that stretch reads PLGELFDHGCDSLSTVFMAIGASIA. Residue D132 participates in Mg(2+) binding. H133 (proton acceptor) is an active-site residue. D136 is a Mg(2+) binding site. Residues 151–160 lie on the Lumenal side of the membrane; sequence VRLGTHPDWL. Residues 161-179 form a helical membrane-spanning segment; it reads FFCSFVGMFMFYCAHWQTY. Topologically, residues 180–190 are cytoplasmic; the sequence is VSGVLRFGRVD. The chain crosses the membrane as a helical span at residues 191–207; it reads VTEIQVALVIVFMLSTF. Residues 208–222 lie on the Lumenal side of the membrane; it reads GGATMWDYTIPILEI. A helical transmembrane segment spans residues 223–248; sequence KLKIVPVLGVVGGLIFSCSNYFHVIL. At 249–265 the chain is on the cytoplasmic side; that stretch reads HGGVGKNGSTIAGTSVL. A helical transmembrane segment spans residues 266 to 281; that stretch reads SPGLHIGLIIILAIMI. Over 282 to 293 the chain is Lumenal; it reads YKKSATNMFEKH. Residues 294–316 traverse the membrane as a helical segment; sequence PCLYTLMFGCVFAKVAQKLVIAH. Over 317–329 the chain is Cytoplasmic; the sequence is MTKSELYLQDTVF. The chain crosses the membrane as a helical span at residues 330 to 339; that stretch reads IGPGLLFLDQ. Residues 340 to 346 lie on the Lumenal side of the membrane; sequence YFNNFID. Residues 347 to 376 traverse the membrane as a helical segment; it reads EYVVLWIAMVISSFDMMIYFTSLCLQISRH. The Cytoplasmic segment spans residues 377 to 398; it reads LHLNIFKTSCQQAPEQVYKHID.

Belongs to the CDP-alcohol phosphatidyltransferase class-I family. Mg(2+) serves as cofactor. Requires Mn(2+) as cofactor. As to expression, expressed in brain, heart, lung, liver, spleen, intestine and muscle. Down-regulated in kidney of type 2 diabetic KK/Ta mice.

It is found in the golgi apparatus membrane. It carries out the reaction CDP-choline + a 1,2-diacyl-sn-glycerol = a 1,2-diacyl-sn-glycero-3-phosphocholine + CMP + H(+). The enzyme catalyses 1-octadecanoyl-2-(5Z,8Z,11Z,14Z-eicosatetraenoyl)-sn-glycerol + CDP-choline = 1-octadecanoyl-2-(5Z,8Z,11Z,14Z-eicosatetraenoyl)-sn-glycero-3-phosphocholine + CMP + H(+). The catalysed reaction is 1-hexadecanoyl-2-(9Z-octadecenoyl)-sn-glycerol + CDP-choline = 1-hexadecanoyl-2-(9Z-octadecenoyl)-sn-glycero-3-phosphocholine + CMP + H(+). It catalyses the reaction 1-hexadecanoyl-2-(4Z,7Z,10Z,13Z,16Z,19Z-docosahexaenoyl)-sn-glycerol + CDP-choline = 1-hexadecanoyl-2-(4Z,7Z,10Z,13Z,16Z,19Z-docosahexaenoyl)-sn-glycero-3-phosphocholine + CMP + H(+). It carries out the reaction 1,2-dioctanoyl-sn-glycerol + CDP-choline = 1,2-dioctanoyl-sn-glycero-3-phosphocholine + CMP + H(+). Its pathway is phospholipid metabolism; phosphatidylcholine biosynthesis; phosphatidylcholine from phosphocholine: step 2/2. Functionally, catalyzes the final step of de novo phosphatidylcholine (PC) synthesis, i.e. the transfer of choline phosphate from CDP-choline to the free hydroxyl of a diacylglycerol (DAG), producing a PC. It thereby plays a central role in the formation and maintenance of vesicular membranes. The chain is Cholinephosphotransferase 1 from Mus musculus (Mouse).